The following is a 241-amino-acid chain: Penton protein H240R (241 aa).

This sequence belongs to the asfivirus H240R family.

The protein resides in the virion. Its function is as follows. Forms the penton at the fivefold vertices of the icosahedral capsid. Together with the minor capsid proteins (p17, p49, and M1249L), forms a complicated network immediately below the outer capsid shell, stabilizing the whole capsid. This is Penton protein H240R from African swine fever virus (isolate Tick/Malawi/Lil 20-1/1983) (ASFV).